Consider the following 595-residue polypeptide: Probable serine/threonine-protein kinase fhkC (595 aa).

The disordered stretch occupies residues 1–84 (MNSNKEETTA…MTEDNSKEED (84 aa)). Low complexity predominate over residues 18–31 (EEQQQQQQPQQQEQ). Polar residues predominate over residues 32 to 49 (INTTTASTTSNGENTASD). The segment covering 50–70 (NNNNSNNNNNNNTNNTNTNNN) has biased composition (low complexity). One can recognise an FHA domain in the interval 116–170 (IILGRSKGVCNYTFTSPTVSGKHCKIYRDPTVKSRNVAFVDDTSTNGTFINNEVI). The 262-residue stretch at 218–479 (YDLREVLGTG…IDQALNHPWF (262 aa)) folds into the Protein kinase domain. ATP is bound by residues 224-232 (LGTGNFASV) and Lys247. Catalysis depends on Asp342, which acts as the Proton acceptor. Thr377 is modified (phosphothreonine; by autocatalysis). A disordered region spans residues 494-595 (KLEFPPPSTN…DEHEQKKVKN (102 aa)). Over residues 508-520 (PTPNTTSSNSQLV) the composition is skewed to polar residues. Residues 530–567 (DNTTDNNNNNNNNNNNNNNNNNNNTTNNSNNIDNNNGN) show a composition bias toward low complexity. Basic and acidic residues predominate over residues 585 to 595 (NDEHEQKKVKN).

Belongs to the protein kinase superfamily. CAMK Ser/Thr protein kinase family. CHK2 subfamily.

It catalyses the reaction L-seryl-[protein] + ATP = O-phospho-L-seryl-[protein] + ADP + H(+). It carries out the reaction L-threonyl-[protein] + ATP = O-phospho-L-threonyl-[protein] + ADP + H(+). The sequence is that of Probable serine/threonine-protein kinase fhkC (fhkC) from Dictyostelium discoideum (Social amoeba).